The following is a 677-amino-acid chain: DNA-directed RNA polymerase subunit beta' (677 aa).

Cys-69, Cys-71, Cys-87, and Cys-90 together coordinate Zn(2+). Residues Asp-489, Asp-491, and Asp-493 each contribute to the Mg(2+) site.

This sequence belongs to the RNA polymerase beta' chain family. RpoC1 subfamily. In terms of assembly, in plastids the minimal PEP RNA polymerase catalytic core is composed of four subunits: alpha, beta, beta', and beta''. When a (nuclear-encoded) sigma factor is associated with the core the holoenzyme is formed, which can initiate transcription. Mg(2+) serves as cofactor. Zn(2+) is required as a cofactor.

The protein localises to the plastid. Its subcellular location is the chloroplast. The catalysed reaction is RNA(n) + a ribonucleoside 5'-triphosphate = RNA(n+1) + diphosphate. In terms of biological role, DNA-dependent RNA polymerase catalyzes the transcription of DNA into RNA using the four ribonucleoside triphosphates as substrates. This chain is DNA-directed RNA polymerase subunit beta', found in Spinacia oleracea (Spinach).